The sequence spans 395 residues: Acetate kinase (395 aa).

Residue N8 participates in Mg(2+) binding. Residue K15 coordinates ATP. Residue R89 participates in substrate binding. D146 acts as the Proton donor/acceptor in catalysis. Residues 206–210 (HLGNG), 281–283 (DLR), and 329–333 (GIGEN) contribute to the ATP site. E382 contributes to the Mg(2+) binding site.

This sequence belongs to the acetokinase family. Homodimer. The cofactor is Mg(2+). Mn(2+) is required as a cofactor.

The protein localises to the cytoplasm. It catalyses the reaction acetate + ATP = acetyl phosphate + ADP. It participates in metabolic intermediate biosynthesis; acetyl-CoA biosynthesis; acetyl-CoA from acetate: step 1/2. Functionally, catalyzes the formation of acetyl phosphate from acetate and ATP. Can also catalyze the reverse reaction. The polypeptide is Acetate kinase (Shouchella clausii (strain KSM-K16) (Alkalihalobacillus clausii)).